The sequence spans 327 residues: MADGELNVDSLISRLLEVRGCRPGKIVQMTEAEVRGLCIKSREIFLSQPILLELEAPLKICGDIHGQYTDLLRLFEYGGFPPEANYLFLGDYVDRGKQSLETICLLLAYKIKYPENFFLLRGNHECASINRIYGFYDECKRRFNIKLWKTFTDCFNCLPIAAIVDEKIFCCHGGLSPDLQSMEQIRRIMRPTDVPDTGLLCDLLWSDPDKDVQGWGENDRGVSFTFGADVVSKFLNRHDLDLICRAHQVVEDGYEFFAKRQLVTLFSAPNYCGEFDNAGGMMSVDETLMCSFQILKPSEKKAKYQYGGLNSGRPVTPPRTANPPKKR.

A2 is subject to N-acetylalanine. Mn(2+)-binding residues include D63, H65, D91, and N123. Catalysis depends on H124, which acts as the Proton donor. Residues H172 and H247 each contribute to the Mn(2+) site. Positions Q305–R327 are disordered.

The protein belongs to the PPP phosphatase family. PP-1 subfamily. Requires Mn(2+) as cofactor.

It localises to the cytoplasm. Its subcellular location is the nucleus. It carries out the reaction O-phospho-L-seryl-[protein] + H2O = L-seryl-[protein] + phosphate. It catalyses the reaction O-phospho-L-threonyl-[protein] + H2O = L-threonyl-[protein] + phosphate. In terms of biological role, protein phosphatase that associates with over 200 regulatory proteins to form highly specific holoenzymes which dephosphorylate hundreds of biological targets. Protein phosphatase (PP1) is essential for cell division, it participates in the regulation of glycogen metabolism, muscle contractility and protein synthesis. Involved in regulation of ionic conductances and long-term synaptic plasticity. The sequence is that of Serine/threonine-protein phosphatase PP1-beta catalytic subunit (ppp1cb) from Xenopus laevis (African clawed frog).